Consider the following 64-residue polypeptide: MVTVKFKYKGEEKEVDTSKIKKVWRVGKMISFTYDEGGGKTGRGAVSEKDAPKELLQMLEKQKK.

N6-methyllysine occurs at positions 5 and 7.

It belongs to the 7 kDa DNA-binding/endoribonuclease P2 family. As to quaternary structure, monomer. In terms of processing, lys-5 and Lys-7 may be methylated.

The protein resides in the cytoplasm. Functionally, can constrain negative DNA supercoils. May be involved in maintaining the integrity of the genome at high temperature. This is DNA-binding protein 7b from Saccharolobus shibatae (strain ATCC 51178 / DSM 5389 / JCM 8931 / NBRC 15437 / B12) (Sulfolobus shibatae).